A 124-amino-acid polypeptide reads, in one-letter code: Putative B3 domain-containing protein At1g51970 (124 aa).

Residues 18-124 (VLKKNLTESD…SRRFLFHHIN (107 aa)) constitute a DNA-binding region (TF-B3).

It is found in the nucleus. The polypeptide is Putative B3 domain-containing protein At1g51970 (Arabidopsis thaliana (Mouse-ear cress)).